Consider the following 590-residue polypeptide: Aspartate--tRNA(Asp/Asn) ligase (590 aa).

Glu178 serves as a coordination point for L-aspartate. The tract at residues 202-205 is aspartate; sequence QIYK. Arg224 lines the L-aspartate pocket. Residues 224–226 and Gln233 contribute to the ATP site; that span reads RDE. Position 453 (His453) interacts with L-aspartate. Glu487 provides a ligand contact to ATP. An L-aspartate-binding site is contributed by Arg494. 539 to 542 serves as a coordination point for ATP; it reads GLDR.

The protein belongs to the class-II aminoacyl-tRNA synthetase family. Type 1 subfamily. Homodimer.

It is found in the cytoplasm. It catalyses the reaction tRNA(Asx) + L-aspartate + ATP = L-aspartyl-tRNA(Asx) + AMP + diphosphate. Functionally, aspartyl-tRNA synthetase with relaxed tRNA specificity since it is able to aspartylate not only its cognate tRNA(Asp) but also tRNA(Asn). Reaction proceeds in two steps: L-aspartate is first activated by ATP to form Asp-AMP and then transferred to the acceptor end of tRNA(Asp/Asn). The polypeptide is Aspartate--tRNA(Asp/Asn) ligase (Treponema denticola (strain ATCC 35405 / DSM 14222 / CIP 103919 / JCM 8153 / KCTC 15104)).